The following is a 316-amino-acid chain: Transaldolase (316 aa).

K125 serves as the catalytic Schiff-base intermediate with substrate.

The protein belongs to the transaldolase family. Type 1 subfamily. In terms of assembly, homodimer.

Its subcellular location is the cytoplasm. It carries out the reaction D-sedoheptulose 7-phosphate + D-glyceraldehyde 3-phosphate = D-erythrose 4-phosphate + beta-D-fructose 6-phosphate. The protein operates within carbohydrate degradation; pentose phosphate pathway; D-glyceraldehyde 3-phosphate and beta-D-fructose 6-phosphate from D-ribose 5-phosphate and D-xylulose 5-phosphate (non-oxidative stage): step 2/3. In terms of biological role, transaldolase is important for the balance of metabolites in the pentose-phosphate pathway. The sequence is that of Transaldolase from Acidovorax sp. (strain JS42).